A 23-amino-acid polypeptide reads, in one-letter code: MWTKPKFEEMRLGFEVTLYISNR.

A cross-link (pyrroloquinoline quinone (Glu-Tyr)) is located at residues 15–19 (EVTLY).

It belongs to the PqqA family.

It functions in the pathway cofactor biosynthesis; pyrroloquinoline quinone biosynthesis. Functionally, required for coenzyme pyrroloquinoline quinone (PQQ) biosynthesis. PQQ is probably formed by cross-linking a specific glutamate to a specific tyrosine residue and excising these residues from the peptide. The protein is Coenzyme PQQ synthesis protein A of Colwellia psychrerythraea (strain 34H / ATCC BAA-681) (Vibrio psychroerythus).